A 194-amino-acid polypeptide reads, in one-letter code: Ferredoxin, apicoplast (194 aa).

The transit peptide at 1–19 (MNIVILLLILTFSIKHSNT) directs the protein to the apicoplast. The 2Fe-2S ferredoxin-type domain occupies 99 to 189 (YNITLRTNDG…DCVIETHKED (91 aa)). [2Fe-2S] cluster contacts are provided by cysteine 135, cysteine 140, cysteine 143, and cysteine 173.

This sequence belongs to the 2Fe2S plant-type ferredoxin family. [2Fe-2S] cluster serves as cofactor.

The protein resides in the plastid. The protein localises to the apicoplast. Its function is as follows. Ferredoxins are iron-sulfur proteins that transfer electrons in a wide variety of metabolic reactions. By transferring electrons to 4-hydroxy-3-methylbut-2-enyl diphosphate reductase LytB/IspH, plays a role in the terminal step of the DOXP/MEP pathway for isoprenoid precursor biosynthesis. This is Ferredoxin, apicoplast from Plasmodium falciparum (isolate 3D7).